A 382-amino-acid polypeptide reads, in one-letter code: ATP phosphoribosyltransferase regulatory subunit (382 aa).

It belongs to the class-II aminoacyl-tRNA synthetase family. HisZ subfamily. As to quaternary structure, heteromultimer composed of HisG and HisZ subunits.

Its subcellular location is the cytoplasm. The protein operates within amino-acid biosynthesis; L-histidine biosynthesis; L-histidine from 5-phospho-alpha-D-ribose 1-diphosphate: step 1/9. In terms of biological role, required for the first step of histidine biosynthesis. May allow the feedback regulation of ATP phosphoribosyltransferase activity by histidine. This Burkholderia lata (strain ATCC 17760 / DSM 23089 / LMG 22485 / NCIMB 9086 / R18194 / 383) protein is ATP phosphoribosyltransferase regulatory subunit.